We begin with the raw amino-acid sequence, 380 residues long: Cytochrome b (380 aa).

The next 4 membrane-spanning stretches (helical) occupy residues 34–54 (FGSL…FLAM), 78–99 (WLLR…YMHI), 114–134 (WNIG…GYVL), and 179–199 (FFAF…VHLL). Residues H84 and H98 each contribute to the heme b site. The heme b site is built by H183 and H197. H202 provides a ligand contact to a ubiquinone. Helical transmembrane passes span 227 to 247 (YKDV…ALFS), 289 to 309 (LGGV…PFVH), 321 to 341 (LAQV…WLGG), and 348 to 368 (YIFL…LFIP).

Belongs to the cytochrome b family. In terms of assembly, the cytochrome bc1 complex contains 3 respiratory subunits (MT-CYB, CYC1 and UQCRFS1), 2 core proteins (UQCRC1 and UQCRC2) and probably 6 low-molecular weight proteins. The cofactor is heme b.

It is found in the mitochondrion inner membrane. Component of the ubiquinol-cytochrome c reductase complex (complex III or cytochrome b-c1 complex) that is part of the mitochondrial respiratory chain. The b-c1 complex mediates electron transfer from ubiquinol to cytochrome c. Contributes to the generation of a proton gradient across the mitochondrial membrane that is then used for ATP synthesis. This Branchiostoma lanceolatum (Common lancelet) protein is Cytochrome b (MT-CYB).